Reading from the N-terminus, the 337-residue chain is Heat-inducible transcription repressor HrcA (337 aa).

The protein belongs to the HrcA family.

In terms of biological role, negative regulator of class I heat shock genes (grpE-dnaK-dnaJ and groELS operons). Prevents heat-shock induction of these operons. The sequence is that of Heat-inducible transcription repressor HrcA from Kocuria rhizophila (strain ATCC 9341 / DSM 348 / NBRC 103217 / DC2201).